The sequence spans 387 residues: DNA double-strand break repair protein Mre11 (387 aa).

The Mn(2+) site is built by D9, H11, D50, and N85. H86 serves as the catalytic Proton donor. Residues H150, D181, and H183 each coordinate Mn(2+). A disordered region spans residues 365–387 (AVLDDDADAADDDGRPTTVEEFQ). The span at 366–375 (VLDDDADAAD) shows a compositional bias: acidic residues.

This sequence belongs to the MRE11/RAD32 family. As to quaternary structure, homodimer. Forms a heterotetramer composed of two Mre11 subunits and two Rad50 subunits. Requires Mn(2+) as cofactor.

Nuclease activity is regulated by Rad50. Part of the Rad50/Mre11 complex, which is involved in the early steps of DNA double-strand break (DSB) repair. Mre11 binds to DSB ends and has both double-stranded 3'-5' exonuclease activity and single-stranded endonuclease activity. The sequence is that of DNA double-strand break repair protein Mre11 from Halobacterium salinarum (strain ATCC 700922 / JCM 11081 / NRC-1) (Halobacterium halobium).